Here is a 173-residue protein sequence, read N- to C-terminus: Mitochondrial import inner membrane translocase subunit TIM22-1 (173 aa).

Residues 1–18 constitute a mitochondrion transit peptide; that stretch reads MADSSAAEPTTGASSPPV. The tract at residues 1–26 is disordered; sequence MADSSAAEPTTGASSPPVASDENSTQ. The next 4 membrane-spanning stretches (helical) occupy residues 52 to 72, 101 to 119, 128 to 144, and 151 to 168; these read VTSG…LGAL, SCKT…ECIV, TVNT…SMSA, and ACIG…IEKF.

Belongs to the Tim17/Tim22/Tim23 family. Expressed in young cotyledons, roots, flowers and leaves.

It localises to the mitochondrion inner membrane. Functionally, essential core component of the TIM22 complex, a complex that mediates the import and insertion of multi-pass transmembrane proteins into the mitochondrial inner membrane. In Arabidopsis thaliana (Mouse-ear cress), this protein is Mitochondrial import inner membrane translocase subunit TIM22-1 (TIM22-1).